The sequence spans 292 residues: uncharacterized protein (292 aa).

This sequence belongs to the glycosyltransferase 2 family. WaaE/KdtX subfamily.

This is an uncharacterized protein from Rickettsia typhi (strain ATCC VR-144 / Wilmington).